The chain runs to 365 residues: Donuts protein 1 (365 aa).

The disordered stretch occupies residues Asn28–Lys49. Positions Glu82–Ser125 constitute a CUE domain. Disordered stretches follow at residues His215–Asn246 and Glu286–Ala335. Basic and acidic residues predominate over residues Ser224 to Gly244. Over residues Glu286 to Val295 the composition is skewed to acidic residues. Positions Glu315 to Gly331 are enriched in basic and acidic residues.

May interact directly with ADY3. Probable component of a spindle pole body (SPB) complex composed of ADY3, SSP1, DON1, MPC54, SPO21/MPC70, NUD1 and CNM67.

The protein resides in the prospore membrane. In terms of biological role, involved in the pathway that organizes the prospore membrane (PSM) during sporulation. The polypeptide is Donuts protein 1 (DON1) (Saccharomyces cerevisiae (strain ATCC 204508 / S288c) (Baker's yeast)).